The sequence spans 328 residues: GMP reductase (328 aa).

Residue cysteine 176 is the Thioimidate intermediate of the active site. 205–228 (IIADGGIRTHGDIAKSIRFGASMV) contacts NADP(+).

Belongs to the IMPDH/GMPR family. GuaC type 2 subfamily.

The enzyme catalyses IMP + NH4(+) + NADP(+) = GMP + NADPH + 2 H(+). Catalyzes the irreversible NADPH-dependent deamination of GMP to IMP. It functions in the conversion of nucleobase, nucleoside and nucleotide derivatives of G to A nucleotides, and in maintaining the intracellular balance of A and G nucleotides. The sequence is that of GMP reductase from Streptococcus pneumoniae (strain Hungary19A-6).